We begin with the raw amino-acid sequence, 254 residues long: Winged helix repair factor 1 (254 aa).

Positions 4–21 (KRHHLIPETFGVKRRRKR) match the Bipartite nuclear localization signal motif. 3 winged helix domain regions span residues 32 to 104 (EPGS…GIIF), 120 to 179 (PYAG…LAVP), and 180 to 254 (GAGR…LPET).

The protein belongs to the STK19 family. Monomer in solution. Homodimer; when bound to DNA. Component of a transcription-coupled nucleotide excision repair (TC-NER) complex composed of STK19, ERCC6, ERCC8, DDA1, DDB1, ELOF1 and UVSSA which assembles and interacts with the multiprotein RNA polymerase II complex when it stalls at DNA lesions. As to expression, monocytes, hepatocytes, epithelial cells, T- and B-lymphocytes.

It localises to the nucleus. The protein localises to the cytoplasm. In terms of biological role, DNA-binding protein which is required for efficient transcription-coupled nucleotide excision repair (TC-NER). Acts as part of a TC-NER complex which assembles and interacts with RNA polymerase II (RNAPII) when it stalls at DNA lesions. TC-NER complex subunit UVSSA binds to the GTF2H1/p62 subunit of the TFIIH transcription factor complex, tethering TFIIH to the TC-NER complex. WHR1/STK19 then interacts with the XPD helicase subunit of TFIIH which guides TFIIH to DNA downstream of the stalled RNAPII, ensuring DNA repair. Directly interacts with RNAPII and also binds to downstream DNA. Promotes the timely removal of DNA damage-stalled RNAPII, allowing downstream NER factors to access DNA lesions. Required for monoubiquitination of UVSSA. Regulates repositioning and stabilization of UVSSA within the TC-NER complex. Stimulates ubiquitination of RNAPII complex member RBP1. Also binds to RNA and regulates the expression levels of many mRNAs. In Homo sapiens (Human), this protein is Winged helix repair factor 1.